A 117-amino-acid polypeptide reads, in one-letter code: Non-specific lipid-transfer protein 1 (117 aa).

Residues Met-1–Ala-25 form the signal peptide. Cystine bridges form between Cys-29–Cys-76, Cys-39–Cys-53, Cys-54–Cys-99, and Cys-74–Cys-113.

Belongs to the plant LTP family.

Its function is as follows. Plant non-specific lipid-transfer proteins transfer phospholipids as well as galactolipids across membranes. May play a role in wax or cutin deposition in the cell walls of expanding epidermal cells and certain secretory tissues. The polypeptide is Non-specific lipid-transfer protein 1 (LTP1) (Brassica napus (Rape)).